The sequence spans 66 residues: UPF0370 protein YpfN (66 aa).

The chain crosses the membrane as a helical span at residues 4 to 24 (LAKYWWILVLVFLVGVLLNVI). Residues 39–66 (KPELPPHRDFNDKWDDEDDWPKKDQSKK) form a disordered region. Over residues 42–51 (LPPHRDFNDK) the composition is skewed to basic and acidic residues.

This sequence belongs to the UPF0370 family.

The protein resides in the cell membrane. This Salmonella arizonae (strain ATCC BAA-731 / CDC346-86 / RSK2980) protein is UPF0370 protein YpfN.